The chain runs to 329 residues: Succinylglutamate desuccinylase (329 aa).

Zn(2+) contacts are provided by His53, Glu56, and His148. Residue Glu211 is part of the active site.

It belongs to the AspA/AstE family. Succinylglutamate desuccinylase subfamily. The cofactor is Zn(2+).

The catalysed reaction is N-succinyl-L-glutamate + H2O = L-glutamate + succinate. The protein operates within amino-acid degradation; L-arginine degradation via AST pathway; L-glutamate and succinate from L-arginine: step 5/5. Its function is as follows. Transforms N(2)-succinylglutamate into succinate and glutamate. This is Succinylglutamate desuccinylase from Erwinia tasmaniensis (strain DSM 17950 / CFBP 7177 / CIP 109463 / NCPPB 4357 / Et1/99).